The sequence spans 454 residues: Probable mitochondrial saccharopine dehydrogenase-like oxidoreductase At5g39410 (454 aa).

Residue methionine 1 is modified to N-acetylmethionine. The segment at arginine 215–proline 234 is disordered.

This sequence belongs to the saccharopine dehydrogenase family.

The protein localises to the mitochondrion membrane. The sequence is that of Probable mitochondrial saccharopine dehydrogenase-like oxidoreductase At5g39410 from Arabidopsis thaliana (Mouse-ear cress).